The sequence spans 456 residues: Perilipin-5 (456 aa).

The segment at 1–20 (MSEDEAAQAPGPSLSEQDQQ) is disordered. The interval 1 to 108 (MSEDEAAQAP…KLEEKLPFLQ (108 aa)) is interaction with LIPE. The segment at 1–173 (MSEDEAAQAP…HFLPMTEEEL (173 aa)) is essential for lipid droplet targeting. Phosphoserine occurs at positions 2, 148, and 324. The tract at residues 185–456 (VGSVEEQRKH…KHTLMPELDF (272 aa)) is interaction with PNPLA2 and ABHD5. Residues 420–456 (AWQAQHGEGTVLSGNIPEEEPEPPSRPKHTLMPELDF) form a disordered region. A recruits mitochondria at the lipid droplet surface region spans residues 438-456 (EEPEPPSRPKHTLMPELDF).

Belongs to the perilipin family. As to quaternary structure, homooligomer. Interacts with PNPLA2; prevents interaction of PNPLA2 with ABHD5. Interacts with ABHD5; targets ABHD5 to lipid droplets and promotes interaction of ABHD5 with PNPLA2. Interacts with LIPE. Post-translationally, phosphorylated by PKA. Phosphorylated on serine in skeletal muscle at rest or upon lipolytic stimulation.

The protein localises to the lipid droplet. It is found in the cytoplasm. Its subcellular location is the mitochondrion. Lipid droplet-associated protein that maintains the balance between lipogenesis and lipolysis and also regulates fatty acid oxidation in oxidative tissues. Recruits mitochondria to the surface of lipid droplets and is involved in lipid droplet homeostasis by regulating both the storage of fatty acids in the form of triglycerides and the release of fatty acids for mitochondrial fatty acid oxidation. In lipid droplet triacylglycerol hydrolysis, plays a role as a scaffolding protein for three major key lipolytic players: ABHD5, PNPLA2 and LIPE. Reduces the triacylglycerol hydrolase activity of PNPLA2 by recruiting and sequestering PNPLA2 to lipid droplets. Phosphorylation by PKA enables lipolysis probably by promoting release of ABHD5 from the perilipin scaffold and by facilitating interaction of ABHD5 with PNPLA2. Also increases lipolysis through interaction with LIPE and upon PKA-mediated phosphorylation of LIPE. The chain is Perilipin-5 (Plin5) from Ovis aries (Sheep).